The chain runs to 155 residues: Transcriptional repressor NrdR (155 aa).

A zinc finger spans residues 3 to 34 (CPYCQNADTRVVDSRLIGEGEQVRRRRQCPSC). The region spanning 49–139 (PRVVKSDGRR…VYRRFEDVGA (91 aa)) is the ATP-cone domain.

It belongs to the NrdR family. Requires Zn(2+) as cofactor.

Functionally, negatively regulates transcription of bacterial ribonucleotide reductase nrd genes and operons by binding to NrdR-boxes. This Halorhodospira halophila (strain DSM 244 / SL1) (Ectothiorhodospira halophila (strain DSM 244 / SL1)) protein is Transcriptional repressor NrdR.